A 426-amino-acid polypeptide reads, in one-letter code: uncharacterized protein (426 aa).

This sequence to M.leprae L518_C2_147 and M.tuberculosis Rv1524.

This is an uncharacterized protein from Mycobacterium tuberculosis (strain CDC 1551 / Oshkosh).